The primary structure comprises 204 residues: N-(5'-phosphoribosyl)anthranilate isomerase (204 aa).

This sequence belongs to the TrpF family.

The enzyme catalyses N-(5-phospho-beta-D-ribosyl)anthranilate = 1-(2-carboxyphenylamino)-1-deoxy-D-ribulose 5-phosphate. Its pathway is amino-acid biosynthesis; L-tryptophan biosynthesis; L-tryptophan from chorismate: step 3/5. The sequence is that of N-(5'-phosphoribosyl)anthranilate isomerase from Syntrophomonas wolfei subsp. wolfei (strain DSM 2245B / Goettingen).